A 705-amino-acid chain; its full sequence is Forkhead box protein P1 (705 aa).

Over residues 1-19 (MMQESGSETKSNGSAIQNG) the composition is skewed to polar residues. Positions 1–41 (MMQESGSETKSNGSAIQNGSSGGNHLLECGALRDTRSNGEA) are disordered. S113 is modified (phosphoserine). Disordered regions lie at residues 267-286 (HTAE…TSTC) and 291-326 (APSK…EHPH). 2 stretches are compositionally biased toward polar residues: residues 276-286 (NHSSLDLTSTC) and 291-311 (APSK…QLSV). Over residues 314-326 (PKRESLSHEEHPH) the composition is skewed to basic and acidic residues. K315 is covalently cross-linked (Glycyl lysine isopeptide (Lys-Gly) (interchain with G-Cter in SUMO2)). A C2H2-type zinc finger spans residues 334 to 359 (GVCKWPGCEAVCDDFPAFLKHLNSEH). A leucine-zipper region spans residues 376 to 397 (VQQLELQLAKDKERLQAMMTHL). Glycyl lysine isopeptide (Lys-Gly) (interchain with G-Cter in SUMO2) cross-links involve residues K400 and K405. Residues 410 to 414 (PLNLV) are CTBP1-binding. Residues 418-431 (TLSKSASEASPQSL) are compositionally biased toward polar residues. The tract at residues 418-450 (TLSKSASEASPQSLPHTPTTPTAPLTPVTQGPS) is disordered. The segment covering 432–446 (PHTPTTPTAPLTPVT) has biased composition (low complexity). A Glycyl lysine isopeptide (Lys-Gly) (interchain with G-Cter in SUMO2) cross-link involves residue K470. The segment at residues 493 to 583 (RPPFTYASLI…PQKISGNPSL (91 aa)) is a DNA-binding region (fork-head). The interval 639 to 705 (EHTNSNESDS…EDEPVNEDME (67 aa)) is disordered. A compositionally biased stretch (polar residues) spans 640-651 (HTNSNESDSSPG). The residue at position 681 (T681) is a Phosphothreonine. S686 carries the post-translational modification Phosphoserine. Residues 695–705 (YEDEPVNEDME) are compositionally biased toward acidic residues.

Forms homodimers and heterodimers with FOXP2 and FOXP4. Dimerization is required for DNA-binding. Self-associates. Interacts with CTBP1. Interacts with NCOR2 and AR. Interacts with FOXP2. Interacts with TBR1. Interacts with AURKA; this interaction facilitates the phosphorylation of FOXP1, which suppresses the expression of FBXL7. Interacts with ZMYM2. In terms of tissue distribution, isoform 5 is specifically expressed in embryonic stem cells. Highest expression in the lung, brain, and spleen. Lower expression in heart, skeletal muscle, kidney, small intestine (isoform 3 not present) and liver.

Its subcellular location is the nucleus. Its function is as follows. Transcriptional repressor. Can act with CTBP1 to synergistically repress transcription but CTPBP1 is not essential. Plays an important role in the specification and differentiation of lung epithelium. Acts cooperatively with FOXP4 to regulate lung secretory epithelial cell fate and regeneration by restricting the goblet cell lineage program; the function may involve regulation of AGR2. Essential transcriptional regulator of B-cell development. Involved in regulation of cardiac muscle cell proliferation. Involved in the columnar organization of spinal motor neurons. Promotes the formation of the lateral motor neuron column (LMC) and the preganglionic motor column (PGC) and is required for respective appropriate motor axon projections. The segment-appropriate generation of spinal cord motor columns requires cooperation with other Hox proteins. Can regulate PITX3 promoter activity; may promote midbrain identity in embryonic stem cell-derived dopamine neurons by regulating PITX3. Negatively regulates the differentiation of T follicular helper cells T(FH)s. Involved in maintenance of hair follicle stem cell quiescence; the function probably involves regulation of FGF18. Represses transcription of various pro-apoptotic genes and cooperates with NF-kappa B-signaling in promoting B-cell expansion by inhibition of caspase-dependent apoptosis. Binds to CSF1R promoter elements and is involved in regulation of monocyte differentiation and macrophage functions; repression of CSF1R in monocytes seems to involve NCOR2 as corepressor. Involved in endothelial cell proliferation, tube formation and migration indicative for a role in angiogenesis; the role in neovascularization seems to implicate suppression of SEMA5B. Can negatively regulate androgen receptor signaling. Acts as a transcriptional activator of the FBXL7 promoter; this activity is regulated by AURKA. In terms of biological role, involved in transcriptional regulation in embryonic stem cells (ESCs). Stimulates expression of transcription factors that are required for pluripotency and decreases expression of differentiation-associated genes. Has distinct DNA-binding specifities as compared to the canonical form and preferentially binds DNA with the sequence 5'-CGATACAA-3' (or closely related sequences). Promotes ESC self-renewal and pluripotency. This chain is Forkhead box protein P1 (Foxp1), found in Mus musculus (Mouse).